The primary structure comprises 310 residues: N-acyl-aromatic-L-amino acid amidohydrolase (carboxylate-forming) (310 aa).

2 residues coordinate Zn(2+): His-20 and Glu-23. Substrate contacts are provided by residues Arg-62 and 69-70; that span reads NR. His-113 lines the Zn(2+) pocket. The substrate site is built by Glu-176 and Tyr-286.

It belongs to the AspA/AstE family. Aspartoacylase subfamily. In terms of assembly, homotetramer. The cofactor is Zn(2+).

Its subcellular location is the apical cell membrane. It localises to the cytoplasm. The enzyme catalyses an N-acyl-aromatic L-alpha-amino acid + H2O = an aromatic L-alpha-amino acid + a carboxylate. It catalyses the reaction an N-acetyl-L-cysteine-S-conjugate + H2O = an S-substituted L-cysteine + acetate. Its function is as follows. Plays an important role in deacetylating mercapturic acids in kidney proximal tubules. The chain is N-acyl-aromatic-L-amino acid amidohydrolase (carboxylate-forming) (acy3) from Xenopus tropicalis (Western clawed frog).